Consider the following 286-residue polypeptide: Transcription factor egl-46 (286 aa).

The C2H2-type 1; atypical zinc-finger motif lies at 180 to 200; sequence CICRLCKVKYEDVFKLAQHKC. C2H2-type zinc fingers lie at residues 208 to 230 and 248 to 271; these read YKCP…RRWH and VSCS…STCQ.

This sequence belongs to the INSM1 family. In terms of assembly, interacts (via C-terminus) with egl-44 (via N-terminus); the interaction is direct; the interaction may regulate transcription. In terms of tissue distribution, expressed in touch cells, HSN cells, ventral cord motor neurons and ciliated ray neurons.

It is found in the nucleus. In terms of biological role, transcription factor. Represses expression of genes involved in differentiation of touch receptor neurons (TRN), probably acting as a heterodimer with egl-44, perhaps by occupying similar cis-regulatory elements as an unc-86/mec-3 heterodimer. Plays a role in cell fate specification of neurons, including the hook neuron HOB, the gas-sensing neuron BAG and touch receptor neurons. Plays a role in neuron differentiation by repressing the expression of zag-1 in FLP neurons, probably acting as a heterodimer with egl-44; because zag-1 represses expression of egl-46 and egl-44, together these proteins form a bistable, negative-feedback loop that regulates the choice between neuronal fates. Acts downstream of egl-44 to prevent touch cell differentiation in FLP neurons. Involved in male mating behavior, acting in concert with egl-44, via modulation of expression of polycystins lov-1 and pkd-2, homeodomain protein ceh-26, and neuropeptide-like protein nlp-8. Modulates the expression of a subset of terminal differentiation genes involved in O(2)- and CO(2)-sensing, acting in parallel to ets-5 and egl-13. May act upstream of RFX transcription factor daf-19 to regulate gene expression specifically in the HOB neuron. Plays a role in specifying commissural dendrites of the PVD nociceptive neurons, acting in concert with egl-44. In association with egl-44, regulates cell cycle exit in the neuronal Q cell lineage. This is Transcription factor egl-46 from Caenorhabditis elegans.